The sequence spans 208 residues: Large ribosomal subunit protein bL25 (208 aa).

A disordered region spans residues leucine 178–glutamate 208. A compositionally biased stretch (acidic residues) spans proline 186 to lysine 195. A compositionally biased stretch (basic and acidic residues) spans glutamate 196–glutamate 208.

This sequence belongs to the bacterial ribosomal protein bL25 family. CTC subfamily. Part of the 50S ribosomal subunit; part of the 5S rRNA/L5/L18/L25 subcomplex. Contacts the 5S rRNA. Binds to the 5S rRNA independently of L5 and L18.

In terms of biological role, this is one of the proteins that binds to the 5S RNA in the ribosome where it forms part of the central protuberance. This Bacillus pumilus (strain SAFR-032) protein is Large ribosomal subunit protein bL25.